The sequence spans 540 residues: Malolactic enzyme (540 aa).

Y90 functions as the Proton donor in the catalytic mechanism. K163 serves as the catalytic Proton acceptor. K163 lines the substrate pocket. Residues E234, D235, and D258 each contribute to the Mn(2+) site. NAD(+) is bound by residues 291-294 (GGSA), N403, and N448. Residue N448 coordinates substrate.

This sequence belongs to the malic enzymes family. Homodimer. The cofactor is Mn(2+). Requires NAD(+) as cofactor.

The enzyme catalyses (S)-malate + H(+) = (S)-lactate + CO2. Involved in the malolactic fermentation (MLF) of wine, which results in a natural decrease in acidity and favorable changes in wine flavors. Catalyzes the decarboxylation of L-malate to L-lactate. This Lactococcus lactis subsp. lactis (strain IL1403) (Streptococcus lactis) protein is Malolactic enzyme.